Reading from the N-terminus, the 156-residue chain is Ribosomal RNA large subunit methyltransferase H (156 aa).

S-adenosyl-L-methionine contacts are provided by residues leucine 73, glycine 104, and 123–128 (LSALTL).

The protein belongs to the RNA methyltransferase RlmH family. As to quaternary structure, homodimer.

The protein resides in the cytoplasm. The enzyme catalyses pseudouridine(1915) in 23S rRNA + S-adenosyl-L-methionine = N(3)-methylpseudouridine(1915) in 23S rRNA + S-adenosyl-L-homocysteine + H(+). Specifically methylates the pseudouridine at position 1915 (m3Psi1915) in 23S rRNA. The chain is Ribosomal RNA large subunit methyltransferase H from Erwinia tasmaniensis (strain DSM 17950 / CFBP 7177 / CIP 109463 / NCPPB 4357 / Et1/99).